A 198-amino-acid chain; its full sequence is ADP-ribosylation factor-like protein 3 (198 aa).

Met1 carries the N-acetylmethionine modification. 24-31 is a GTP binding site; the sequence is GLDNAGKT. Residue Lys50 forms a Glycyl lysine isopeptide (Lys-Gly) (interchain with G-Cter in ubiquitin) linkage. Residues 74-78 and 133-136 each bind GTP; these read DVGGQ and NKQD.

It belongs to the small GTPase superfamily. Arf family. In terms of assembly, interacts with SYS1 and SLO1.

The protein resides in the golgi apparatus. Involved in the targeting of ARL1 to the Golgi. Can bind and hydrolyze GTP. The chain is ADP-ribosylation factor-like protein 3 (ARL3) from Saccharomyces cerevisiae (strain ATCC 204508 / S288c) (Baker's yeast).